A 349-amino-acid polypeptide reads, in one-letter code: NADH-quinone oxidoreductase subunit H (349 aa).

Helical transmembrane passes span 20–42, 88–108, 123–143, 167–187, 202–222, 249–269, 284–304, and 325–345; these read WTLI…LTYF, GIFI…WAVV, LLYI…SGWA, MGFS…VEIV, FLSW…ISGV, GMAF…VSAL, FLPD…FLFL, and VFVP…MSPL.

This sequence belongs to the complex I subunit 1 family. As to quaternary structure, NDH-1 is composed of 14 different subunits. Subunits NuoA, H, J, K, L, M, N constitute the membrane sector of the complex.

Its subcellular location is the cell inner membrane. The catalysed reaction is a quinone + NADH + 5 H(+)(in) = a quinol + NAD(+) + 4 H(+)(out). NDH-1 shuttles electrons from NADH, via FMN and iron-sulfur (Fe-S) centers, to quinones in the respiratory chain. The immediate electron acceptor for the enzyme in this species is believed to be ubiquinone. Couples the redox reaction to proton translocation (for every two electrons transferred, four hydrogen ions are translocated across the cytoplasmic membrane), and thus conserves the redox energy in a proton gradient. This subunit may bind ubiquinone. The polypeptide is NADH-quinone oxidoreductase subunit H (Dechloromonas aromatica (strain RCB)).